The primary structure comprises 284 residues: Syntaxin-like protein psy1 (284 aa).

Positions 23 to 57 (EEIDHIRDAIRQIEDNVGRIEMLHQQSLQEIDEAN) form a coiled coil. The t-SNARE coiled-coil homology domain occupies 181-243 (LREVQERHAD…GEGTQHMDRA (63 aa)). Residues 260-280 (ICVVIICVIVAVLCGVLIPVL) traverse the membrane as a helical; Anchor for type IV membrane protein segment.

The protein belongs to the syntaxin family.

Its subcellular location is the cell membrane. It localises to the prospore membrane. This Schizosaccharomyces pombe (strain 972 / ATCC 24843) (Fission yeast) protein is Syntaxin-like protein psy1 (psy1).